We begin with the raw amino-acid sequence, 218 residues long: Outer-membrane lipoprotein LolB (218 aa).

An N-terminal signal peptide occupies residues 1 to 24 (MNNLSYLTKIPLIWVLLSVTLLSA). A lipid anchor (N-palmitoyl cysteine) is attached at Cys25. Cys25 carries the S-diacylglycerol cysteine lipid modification.

It belongs to the LolB family. As to quaternary structure, monomer.

The protein resides in the cell outer membrane. Its function is as follows. Plays a critical role in the incorporation of lipoproteins in the outer membrane after they are released by the LolA protein. This Shewanella sediminis (strain HAW-EB3) protein is Outer-membrane lipoprotein LolB.